A 463-amino-acid polypeptide reads, in one-letter code: MDLTIRTIYKDPARYAGQEVILKGWIRNHRDQKEFGFINLNDGSFFENIQVVYERATTKDFDAVTRLSVGASIEVIGTLVLTPDRSQPFEIKALEVRLIGDSGENYPIQPKRHTREFLREVAHLRPRTNLFSAVFRVRSIAAYAIHKFFQEQDFVYVHTPILTANDGEGAGAMFKVTTLDMNKPPRNEDSSIDYSKDFFGREANLTVTGQLEGEAYAHAFRNIYTFGPTFRAENSNTTTHASEFWMIEPEIAFADLNDNMELIERMVKYVTSYVLEHAKEEMAFFDKFVEKGLLTKLDNLLKSSFKRITHEEAINILLKSNHKFENQPKHGEDLAKEHERYLTEKAFHGPVFVKDWPKDIKAFYMRLNDDQKTVAAVDLLVPGSGELVGGSQREERLDVLLKRMEDMHVPVKDLDWYLDLRRYGGVQTSGFGLGFERYLIYVTGVENIRDVIPFPRTPKNILF.

This sequence belongs to the class-II aminoacyl-tRNA synthetase family. In terms of assembly, homodimer.

Its subcellular location is the cytoplasm. The catalysed reaction is tRNA(Asn) + L-asparagine + ATP = L-asparaginyl-tRNA(Asn) + AMP + diphosphate + H(+). This Acholeplasma laidlawii (strain PG-8A) protein is Asparagine--tRNA ligase.